Here is a 1226-residue protein sequence, read N- to C-terminus: Phosphatidylinositol 3,4,5-trisphosphate 5-phosphatase 2B (1226 aa).

The SH2 domain occupies 6 to 102 (WYHRDISRVR…GLVAPLLYPV (97 aa)). Residues 106–144 (SEANDESSDGDDEKPGSTFANSPPRAISPTATSPPSSSA) are disordered. The span at 108-117 (ANDESSDGDD) shows a compositional bias: acidic residues. Residues 127–144 (SPPRAISPTATSPPSSSA) show a composition bias toward low complexity. The NPXY motif motif lies at 906-909 (NPAY). Residue Tyr-909 is modified to Phosphotyrosine. 2 disordered regions span residues 945–964 (RVTG…DFTE) and 985–1035 (SSAA…LSGK). Residues 1011–1025 (HSSNSSLQLQSHKNN) are compositionally biased toward low complexity. An SAM domain is found at 1163–1226 (GAPETVRELL…ILENLPKIWD (64 aa)).

This sequence belongs to the inositol 1,4,5-trisphosphate 5-phosphatase family. Post-translationally, tyrosine phosphorylated by the members of the SRC family after exposure to a diverse array of extracellular stimuli.

It localises to the cytoplasm. Its subcellular location is the cytosol. It is found in the cytoskeleton. The protein resides in the membrane. The protein localises to the cell projection. It localises to the filopodium. Its subcellular location is the lamellipodium. It is found in the nucleus. The protein resides in the nucleus speckle. The enzyme catalyses a 1,2-diacyl-sn-glycero-3-phospho-(1D-myo-inositol-3,4,5-trisphosphate) + H2O = a 1,2-diacyl-sn-glycero-3-phospho-(1D-myo-inositol-3,4-bisphosphate) + phosphate. Its function is as follows. Phosphatidylinositol (PtdIns) phosphatase that specifically hydrolyzes the 5-phosphate of phosphatidylinositol-3,4,5-trisphosphate (PtdIns(3,4,5)P3) to produce PtdIns(3,4)P2, thereby negatively regulating the PI3K (phosphoinositide 3-kinase) pathways. Plays a central role in regulation of PI3K-dependent insulin signaling, although the precise molecular mechanisms and signaling pathways remain unclear. Part of a signaling pathway that regulates actin cytoskeleton remodeling. Required for the maintenance and dynamic remodeling of actin structures as well as in endocytosis, having a major impact on ligand-induced EGFR internalization and degradation. Participates in regulation of cortical and submembraneous actin. Regulates cell adhesion and cell spreading. Acts as a negative regulator of the FC-gamma-RIIA receptor (FCGR2A). Mediates signaling from the FC-gamma-RIIB receptor (FCGR2B), playing a central role in terminating signal transduction from activating immune/hematopoietic cell receptor systems. May also hydrolyze PtdIns(1,3,4,5)P4, and could thus affect the levels of the higher inositol polyphosphates like InsP6. This chain is Phosphatidylinositol 3,4,5-trisphosphate 5-phosphatase 2B (inppl1b), found in Danio rerio (Zebrafish).